The chain runs to 281 residues: Cell growth regulator with EF hand domain protein 1 (281 aa).

An N-terminal signal peptide occupies residues 1-21 (MSRWLMQMLMLPLLLLPLGQA). 2 consecutive EF-hand domains span residues 71–106 (NREQ…ALAP) and 115–150 (PVIL…APKR). Ca(2+) is bound by residues D84, D86, N88, Q90, E95, D128, D130, D132, and E139. A disordered region spans residues 146–281 (EAPKRAESLP…HSIQLENDEI (136 aa)). Polar residues predominate over residues 169–184 (LLANSPLQSETQQSLG). Residues 185–213 (TKEEITSQVEAKRALEPEQEAGHHIETKV) show a composition bias toward basic and acidic residues. A phosphoserine mark is found at S217 and S228. Residues 234–256 (GPREDAERQVESKDNEGEAKDLP) show a composition bias toward basic and acidic residues.

In terms of processing, probably digested extracellularly by an unknown serine protease generating extremely hydrophobic bioactive peptides. As to expression, expressed predominantly in whole brain and kidney, with limited expression in heart, lung, liver, and skeletal muscle and no expression in spleen and testis. Also expressed in pituitary gland, adrenal gland, digestive tract, and reproductive organs.

The protein localises to the secreted. Functionally, mediates cell-cell adhesion in a calcium-dependent manner. Able to inhibit growth in several cell lines. This chain is Cell growth regulator with EF hand domain protein 1, found in Rattus norvegicus (Rat).